A 695-amino-acid chain; its full sequence is Hypersensitivity response secretion protein HrpI (695 aa).

7 helical membrane passes run 21 to 38 (LVGA…ITPL), 45 to 61 (VLIA…IMLA), 68 to 92 (LAFS…VSTT), 111 to 135 (FVVG…FLVI), 203 to 223 (AIAS…IGVL), 244 to 262 (GLIA…GMII), and 311 to 327 (VFIT…LLQL).

This sequence belongs to the FHIPEP (flagella/HR/invasion proteins export pore) family.

The protein localises to the cell inner membrane. Functionally, involved in the secretion of harpin-pss; a proteinaceous elicitor of the hypersensitivity response in plants. The protein is Hypersensitivity response secretion protein HrpI (hrpI) of Pseudomonas syringae pv. syringae.